The primary structure comprises 263 residues: Orotidine 5'-phosphate decarboxylase (263 aa).

Substrate contacts are provided by residues D36, 58 to 60 (KTH), 90 to 99 (DRKFADIGNT), Y216, and R234. K92 functions as the Proton donor in the catalytic mechanism.

It belongs to the OMP decarboxylase family.

The enzyme catalyses orotidine 5'-phosphate + H(+) = UMP + CO2. Its pathway is pyrimidine metabolism; UMP biosynthesis via de novo pathway; UMP from orotate: step 2/2. The polypeptide is Orotidine 5'-phosphate decarboxylase (URA3) (Komagataella pastoris (Yeast)).